Here is a 231-residue protein sequence, read N- to C-terminus: Small ribosomal subunit protein uS2 (231 aa).

This sequence belongs to the universal ribosomal protein uS2 family.

The protein is Small ribosomal subunit protein uS2 of Blochmanniella floridana.